We begin with the raw amino-acid sequence, 448 residues long: Glucose-6-phosphate isomerase (448 aa).

The active-site Proton donor is Glu-290. Active-site residues include His-311 and Lys-425.

This sequence belongs to the GPI family.

It localises to the cytoplasm. The catalysed reaction is alpha-D-glucose 6-phosphate = beta-D-fructose 6-phosphate. It participates in carbohydrate biosynthesis; gluconeogenesis. The protein operates within carbohydrate degradation; glycolysis; D-glyceraldehyde 3-phosphate and glycerone phosphate from D-glucose: step 2/4. In terms of biological role, catalyzes the reversible isomerization of glucose-6-phosphate to fructose-6-phosphate. In Lactococcus lactis subsp. cremoris (strain SK11), this protein is Glucose-6-phosphate isomerase.